The following is a 460-amino-acid chain: ATP synthase subunit beta (460 aa).

Residue 150–157 coordinates ATP; sequence GGAGVGKT.

It belongs to the ATPase alpha/beta chains family. In terms of assembly, F-type ATPases have 2 components, CF(1) - the catalytic core - and CF(0) - the membrane proton channel. CF(1) has five subunits: alpha(3), beta(3), gamma(1), delta(1), epsilon(1). CF(0) has three main subunits: a(1), b(2) and c(9-12). The alpha and beta chains form an alternating ring which encloses part of the gamma chain. CF(1) is attached to CF(0) by a central stalk formed by the gamma and epsilon chains, while a peripheral stalk is formed by the delta and b chains.

The protein localises to the cell inner membrane. The catalysed reaction is ATP + H2O + 4 H(+)(in) = ADP + phosphate + 5 H(+)(out). Functionally, produces ATP from ADP in the presence of a proton gradient across the membrane. The catalytic sites are hosted primarily by the beta subunits. This chain is ATP synthase subunit beta, found in Proteus mirabilis (strain HI4320).